Here is a 165-residue protein sequence, read N- to C-terminus: NADPH-dependent 7-cyano-7-deazaguanine reductase (165 aa).

The Thioimide intermediate role is filled by Cys56. Catalysis depends on Asp63, which acts as the Proton donor. Residues 78–80 (VES) and 97–98 (HE) each bind substrate.

It belongs to the GTP cyclohydrolase I family. QueF type 1 subfamily.

It localises to the cytoplasm. It carries out the reaction 7-aminomethyl-7-carbaguanine + 2 NADP(+) = 7-cyano-7-deazaguanine + 2 NADPH + 3 H(+). Its pathway is tRNA modification; tRNA-queuosine biosynthesis. Functionally, catalyzes the NADPH-dependent reduction of 7-cyano-7-deazaguanine (preQ0) to 7-aminomethyl-7-deazaguanine (preQ1). This chain is NADPH-dependent 7-cyano-7-deazaguanine reductase, found in Bacillus licheniformis (strain ATCC 14580 / DSM 13 / JCM 2505 / CCUG 7422 / NBRC 12200 / NCIMB 9375 / NCTC 10341 / NRRL NRS-1264 / Gibson 46).